A 126-amino-acid chain; its full sequence is Aspartate 1-decarboxylase (126 aa).

Ser25 serves as the catalytic Schiff-base intermediate with substrate; via pyruvic acid. Ser25 is subject to Pyruvic acid (Ser). Thr57 contributes to the substrate binding site. Tyr58 serves as the catalytic Proton donor. 73 to 75 (GAA) contacts substrate.

It belongs to the PanD family. As to quaternary structure, heterooctamer of four alpha and four beta subunits. Pyruvate serves as cofactor. Is synthesized initially as an inactive proenzyme, which is activated by self-cleavage at a specific serine bond to produce a beta-subunit with a hydroxyl group at its C-terminus and an alpha-subunit with a pyruvoyl group at its N-terminus.

The protein localises to the cytoplasm. It catalyses the reaction L-aspartate + H(+) = beta-alanine + CO2. Its pathway is cofactor biosynthesis; (R)-pantothenate biosynthesis; beta-alanine from L-aspartate: step 1/1. Its function is as follows. Catalyzes the pyruvoyl-dependent decarboxylation of aspartate to produce beta-alanine. This chain is Aspartate 1-decarboxylase, found in Alcanivorax borkumensis (strain ATCC 700651 / DSM 11573 / NCIMB 13689 / SK2).